Consider the following 147-residue polypeptide: HTH-type transcriptional regulator MntR (147 aa).

The HTH dtxR-type domain maps to 1–63 (MPTPSMEDYI…YEKYRGFVLT (63 aa)). Mn(2+) is bound by residues Asp-8, Glu-11, His-77, Glu-99, Glu-102, and His-103.

Belongs to the DtxR/MntR family. As to quaternary structure, homodimer.

It localises to the cytoplasm. DNA binding is strongly activated by Mn(2+). Central regulator of manganese homeostasis. The chain is HTH-type transcriptional regulator MntR from Oceanobacillus iheyensis (strain DSM 14371 / CIP 107618 / JCM 11309 / KCTC 3954 / HTE831).